Reading from the N-terminus, the 663-residue chain is Beta-galactosidase YesZ (663 aa).

A substrate-binding site is contributed by R106. Position 110 (C110) interacts with Zn(2+). N144 lines the substrate pocket. Catalysis depends on E145, which acts as the Proton donor. Residues C153, C155, and C158 each coordinate Zn(2+). E296 serves as the catalytic Nucleophile. 345 to 348 (EISH) is a binding site for substrate.

This sequence belongs to the glycosyl hydrolase 42 family. In terms of assembly, homotrimer.

The enzyme catalyses Hydrolysis of terminal non-reducing beta-D-galactose residues in beta-D-galactosides.. Its function is as follows. May play a role in the degradation of rhamnogalacturonan derived from plant cell walls. The polypeptide is Beta-galactosidase YesZ (yesZ) (Bacillus subtilis (strain 168)).